Consider the following 419-residue polypeptide: UDP-N-acetylglucosamine 1-carboxyvinyltransferase (419 aa).

Phosphoenolpyruvate is bound at residue 22-23 (KN). R91 serves as a coordination point for UDP-N-acetyl-alpha-D-glucosamine. Catalysis depends on C115, which acts as the Proton donor. C115 carries the post-translational modification 2-(S-cysteinyl)pyruvic acid O-phosphothioketal. UDP-N-acetyl-alpha-D-glucosamine-binding positions include 120–124 (RPVDL), 160–163 (KVSV), D305, and V327.

This sequence belongs to the EPSP synthase family. MurA subfamily.

The protein resides in the cytoplasm. It catalyses the reaction phosphoenolpyruvate + UDP-N-acetyl-alpha-D-glucosamine = UDP-N-acetyl-3-O-(1-carboxyvinyl)-alpha-D-glucosamine + phosphate. The protein operates within cell wall biogenesis; peptidoglycan biosynthesis. Functionally, cell wall formation. Adds enolpyruvyl to UDP-N-acetylglucosamine. The chain is UDP-N-acetylglucosamine 1-carboxyvinyltransferase from Shigella boydii serotype 18 (strain CDC 3083-94 / BS512).